Reading from the N-terminus, the 196-residue chain is Phosphoheptose isomerase (196 aa).

Positions 31-196 (VARQFKAGNK…KAGLEAQIAV (166 aa)) constitute an SIS domain. 46 to 48 (NGG) provides a ligand contact to substrate. The Zn(2+) site is built by H55 and E59. Substrate-binding positions include E59, 88-89 (ND), 114-116 (STS), S119, and Q166. Positions 166 and 174 each coordinate Zn(2+).

It belongs to the SIS family. GmhA subfamily. Requires Zn(2+) as cofactor.

The protein localises to the cytoplasm. The catalysed reaction is 2 D-sedoheptulose 7-phosphate = D-glycero-alpha-D-manno-heptose 7-phosphate + D-glycero-beta-D-manno-heptose 7-phosphate. Its pathway is carbohydrate biosynthesis; D-glycero-D-manno-heptose 7-phosphate biosynthesis; D-glycero-alpha-D-manno-heptose 7-phosphate and D-glycero-beta-D-manno-heptose 7-phosphate from sedoheptulose 7-phosphate: step 1/1. Its function is as follows. Catalyzes the isomerization of sedoheptulose 7-phosphate in D-glycero-D-manno-heptose 7-phosphate. The chain is Phosphoheptose isomerase from Crocosphaera subtropica (strain ATCC 51142 / BH68) (Cyanothece sp. (strain ATCC 51142)).